Reading from the N-terminus, the 154-residue chain is 3-hydroxyacyl-[acyl-carrier-protein] dehydratase FabZ (154 aa).

The active site involves His60.

This sequence belongs to the thioester dehydratase family. FabZ subfamily.

The protein localises to the cytoplasm. The catalysed reaction is a (3R)-hydroxyacyl-[ACP] = a (2E)-enoyl-[ACP] + H2O. Involved in unsaturated fatty acids biosynthesis. Catalyzes the dehydration of short chain beta-hydroxyacyl-ACPs and long chain saturated and unsaturated beta-hydroxyacyl-ACPs. This chain is 3-hydroxyacyl-[acyl-carrier-protein] dehydratase FabZ, found in Synechococcus sp. (strain CC9311).